The primary structure comprises 527 residues: Phosphoenolpyruvate carboxykinase (ATP) (527 aa).

Substrate is bound by residues R56, Y192, and K198. Residues K198, H217, and 233-241 (GLSGTGKTT) each bind ATP. The Mn(2+) site is built by K198 and H217. Residue D254 coordinates Mn(2+). ATP contacts are provided by E282, R319, and T444. R319 contacts substrate.

The protein belongs to the phosphoenolpyruvate carboxykinase (ATP) family. The cofactor is Mn(2+).

It is found in the cytoplasm. The catalysed reaction is oxaloacetate + ATP = phosphoenolpyruvate + ADP + CO2. The protein operates within carbohydrate biosynthesis; gluconeogenesis. In terms of biological role, involved in the gluconeogenesis. Catalyzes the conversion of oxaloacetate (OAA) to phosphoenolpyruvate (PEP) through direct phosphoryl transfer between the nucleoside triphosphate and OAA. The chain is Phosphoenolpyruvate carboxykinase (ATP) from Bacillus subtilis (strain 168).